The sequence spans 343 residues: Holliday junction branch migration complex subunit RuvB (343 aa).

The segment at M1 to Y186 is large ATPase domain (RuvB-L). ATP-binding positions include L25, R26, G67, K70, T71, S72, E133–F135, R176, Y186, and R223. Residue T71 participates in Mg(2+) binding. A small ATPAse domain (RuvB-S) region spans residues D187 to G257. The segment at A260–F343 is head domain (RuvB-H). The DNA site is built by R296, R315, and R320.

Belongs to the RuvB family. In terms of assembly, homohexamer. Forms an RuvA(8)-RuvB(12)-Holliday junction (HJ) complex. HJ DNA is sandwiched between 2 RuvA tetramers; dsDNA enters through RuvA and exits via RuvB. An RuvB hexamer assembles on each DNA strand where it exits the tetramer. Each RuvB hexamer is contacted by two RuvA subunits (via domain III) on 2 adjacent RuvB subunits; this complex drives branch migration. In the full resolvosome a probable DNA-RuvA(4)-RuvB(12)-RuvC(2) complex forms which resolves the HJ.

It is found in the cytoplasm. The catalysed reaction is ATP + H2O = ADP + phosphate + H(+). Its function is as follows. The RuvA-RuvB-RuvC complex processes Holliday junction (HJ) DNA during genetic recombination and DNA repair, while the RuvA-RuvB complex plays an important role in the rescue of blocked DNA replication forks via replication fork reversal (RFR). RuvA specifically binds to HJ cruciform DNA, conferring on it an open structure. The RuvB hexamer acts as an ATP-dependent pump, pulling dsDNA into and through the RuvAB complex. RuvB forms 2 homohexamers on either side of HJ DNA bound by 1 or 2 RuvA tetramers; 4 subunits per hexamer contact DNA at a time. Coordinated motions by a converter formed by DNA-disengaged RuvB subunits stimulates ATP hydrolysis and nucleotide exchange. Immobilization of the converter enables RuvB to convert the ATP-contained energy into a lever motion, pulling 2 nucleotides of DNA out of the RuvA tetramer per ATP hydrolyzed, thus driving DNA branch migration. The RuvB motors rotate together with the DNA substrate, which together with the progressing nucleotide cycle form the mechanistic basis for DNA recombination by continuous HJ branch migration. Branch migration allows RuvC to scan DNA until it finds its consensus sequence, where it cleaves and resolves cruciform DNA. The polypeptide is Holliday junction branch migration complex subunit RuvB (Myxococcus xanthus (strain DK1622)).